A 234-amino-acid chain; its full sequence is Flagellar L-ring protein (234 aa).

Positions 1–15 (MRYAVICMLLLAASG) are cleaved as a signal peptide. A lipid anchor (N-palmitoyl cysteine) is attached at Cys-16. Cys-16 is lipidated: S-diacylglycerol cysteine.

The protein belongs to the FlgH family. As to quaternary structure, the basal body constitutes a major portion of the flagellar organelle and consists of four rings (L,P,S, and M) mounted on a central rod.

The protein resides in the cell outer membrane. Its subcellular location is the bacterial flagellum basal body. Assembles around the rod to form the L-ring and probably protects the motor/basal body from shearing forces during rotation. The chain is Flagellar L-ring protein from Oleidesulfovibrio alaskensis (strain ATCC BAA-1058 / DSM 17464 / G20) (Desulfovibrio alaskensis).